Reading from the N-terminus, the 243-residue chain is Probable 6-oxopurine nucleoside phosphorylase (243 aa).

Phosphate-binding positions include T8 and 48 to 49 (RH). Substrate is bound at residue M174. Residue T175 participates in phosphate binding. 198–200 (NYA) contacts substrate.

This sequence belongs to the PNP/MTAP phosphorylase family. MTAP subfamily. Homohexamer. Dimer of a homotrimer.

The catalysed reaction is a purine D-ribonucleoside + phosphate = a purine nucleobase + alpha-D-ribose 1-phosphate. Its pathway is purine metabolism; purine nucleoside salvage. Purine nucleoside phosphorylase which is highly specific for 6-oxopurine nucleosides. Cleaves guanosine or inosine to respective bases and sugar-1-phosphate molecules. Involved in purine salvage. The polypeptide is Probable 6-oxopurine nucleoside phosphorylase (Archaeoglobus fulgidus (strain ATCC 49558 / DSM 4304 / JCM 9628 / NBRC 100126 / VC-16)).